Reading from the N-terminus, the 554-residue chain is DNA ligase B (554 aa).

K122 acts as the N6-AMP-lysine intermediate in catalysis.

The protein belongs to the NAD-dependent DNA ligase family. LigB subfamily.

It carries out the reaction NAD(+) + (deoxyribonucleotide)n-3'-hydroxyl + 5'-phospho-(deoxyribonucleotide)m = (deoxyribonucleotide)n+m + AMP + beta-nicotinamide D-nucleotide.. Functionally, catalyzes the formation of phosphodiester linkages between 5'-phosphoryl and 3'-hydroxyl groups in double-stranded DNA using NAD as a coenzyme and as the energy source for the reaction. The polypeptide is DNA ligase B (Pseudomonas fluorescens (strain SBW25)).